The chain runs to 476 residues: Beta-amyrin 28-monooxygenase (476 aa).

The chain crosses the membrane as a helical span at residues 2–22 (ELLYVCLVCVFVFLVSLLLLY). Residue Cys421 participates in heme binding.

Belongs to the cytochrome P450 family. It depends on heme as a cofactor. Specifically expressed in roots.

Its subcellular location is the membrane. The catalysed reaction is beta-amyrin + 3 reduced [NADPH--hemoprotein reductase] + 3 O2 = oleanolate + 3 oxidized [NADPH--hemoprotein reductase] + 4 H2O + 4 H(+). Its function is as follows. Catalyzes the carboxylation of beta-amyrin at the C-28 position to form oleanolate. Catalyzes the carboxylation of alpha-amyrin at the C-28 position to form ursolate. The polypeptide is Beta-amyrin 28-monooxygenase (CYP716A44) (Solanum lycopersicum (Tomato)).